Here is a 590-residue protein sequence, read N- to C-terminus: V-type ATP synthase alpha chain (590 aa).

ATP is bound at residue Gly234 to Thr241.

It belongs to the ATPase alpha/beta chains family.

The catalysed reaction is ATP + H2O + 4 H(+)(in) = ADP + phosphate + 5 H(+)(out). Functionally, produces ATP from ADP in the presence of a proton gradient across the membrane. The V-type alpha chain is a catalytic subunit. This is V-type ATP synthase alpha chain from Halothermothrix orenii (strain H 168 / OCM 544 / DSM 9562).